Reading from the N-terminus, the 164-residue chain is C-phycoerythrin alpha chain (164 aa).

Positions 82 and 139 each coordinate (2R,3E)-phycoerythrobilin.

This sequence belongs to the phycobiliprotein family. In terms of assembly, heterodimer of an alpha and a beta chain. In terms of processing, contains two covalently linked bilin chromophores.

It localises to the cellular thylakoid membrane. Its function is as follows. Light-harvesting photosynthetic bile pigment-protein from the phycobiliprotein complex. This is C-phycoerythrin alpha chain (cpeA) from Synechocystis sp. (strain PCC 6701).